Here is a 413-residue protein sequence, read N- to C-terminus: MASEDEVSEFLGQNPETAAWLERVRGQCESDKLWRYRREFILRNLSDVCGEGEIPPPPETNHKELDRLLAYSMVWANHVFTGCRYPIQVIEKVLKMAENIKVTDAPTHTTRDELVAKVKKRGNSSSNEGVEELPRKKKKSNDHGARESSYIDDTVEIRNQPGDARERSSGKICDGYIPSTSLNKREAHSRTDVNTEFYEESGNGRPLPVSKAKSSLNPPEEAGYKHAATQGRKSHSDSRYQTAVKGPSQSSDNALKPTRRFTTEHTKERQPFFNRLYKTVAWKLVSAGGFNANLNHEELLNTSIESLKATLEIAFVPLKDLADFPQNKTSQENTVCELRCKSVYLGMGCGKTMDTAKAVAFREAVKLFLKKKVVVRICRRKFNGRDVEDLVLVDEEFRPPNLPPAVKNPHELV.

The 98-residue stretch at 21-118 (LERVRGQCES…TTRDELVAKV (98 aa)) folds into the XRN2-binding (XTBD) domain. The interval 118 to 266 (VKKRGNSSSN…PTRRFTTEHT (149 aa)) is disordered. A compositionally biased stretch (basic and acidic residues) spans 183–193 (NKREAHSRTDV).

This sequence belongs to the CARF family.

The protein resides in the nucleus. It is found in the nucleoplasm. In terms of biological role, may regulate DNA damage response and cell proliferation. This is Protein CDKN2AIP homolog B (cdkn2aip-b) from Xenopus laevis (African clawed frog).